Consider the following 220-residue polypeptide: uncharacterized protein (220 aa).

7 helical membrane-spanning segments follow: residues 25–45 (YFLLGLTLAFSAVVAYISMSL), 50–70 (PGLILMLAGFYGLLFLTYKLS), 74–94 (LGILSTFAFTGFLGYTLGPIL), 105–125 (IVVLALAGTAAVFFACSAYVL), 135–155 (SGTIFALFIVLLLGMVASFFF), 158–178 (PMLYIAISGLFVVFSTLGILY), and 196–216 (VSIFVSLYNLFISLLNIFSIL).

It belongs to the BI1 family.

It localises to the cell membrane. This is an uncharacterized protein from Pasteurella multocida (strain Pm70).